Consider the following 242-residue polypeptide: Dehydration-responsive element-binding protein 1J (242 aa).

Residues Ser-20–Thr-29 show a composition bias toward low complexity. The segment at Ser-20–Gln-44 is disordered. Residues Val-50 to Thr-109 constitute a DNA-binding region (AP2/ERF). The tract at residues Phe-143–Thr-184 is disordered. A compositionally biased stretch (low complexity) spans Ser-148–Thr-184.

This sequence belongs to the AP2/ERF transcription factor family. ERF subfamily.

The protein localises to the nucleus. Functionally, transcriptional activator that binds specifically to the DNA sequence 5'-[AG]CCGAC-3'. Binding to the C-repeat/DRE element mediates high salinity- and dehydration-inducible transcription. The sequence is that of Dehydration-responsive element-binding protein 1J (DREB1J) from Oryza sativa subsp. indica (Rice).